Consider the following 689-residue polypeptide: Glycine--tRNA ligase beta subunit (689 aa).

This sequence belongs to the class-II aminoacyl-tRNA synthetase family. Tetramer of two alpha and two beta subunits.

It is found in the cytoplasm. The enzyme catalyses tRNA(Gly) + glycine + ATP = glycyl-tRNA(Gly) + AMP + diphosphate. The sequence is that of Glycine--tRNA ligase beta subunit from Dictyoglomus turgidum (strain DSM 6724 / Z-1310).